Here is a 461-residue protein sequence, read N- to C-terminus: MSRINKNVVLALLTLTSSAFLLFQLYYYKHYLSTRNGAGLSKSKGSRIGFDSTQWRAVKKFIMLTSNQNVPVFLIDPLILELINKNFEQVKNTSQGSISQCTFFCVPRDFTAFALQYHLWKNEEGWFRIAENMGFQCLKIESKDPRLDGIDSLSGTEIPLHYICKLAAHAIHLVVFHERSSNYLWHGHLRLKEHIDRKFVPFRKLQFGRYPGAFDRPELQQVTVDGLEVLIPKDPMHFVEEVPHSRFIECRYKEARAFFQQYLDDNTVEAMAFRKSAKELLQLAAKTLNKLGVPFWLSSGTCLGWYRQCNIIPYSKDVDLGIFIQDYKSDIILAFQDAGLPLKHKFGKVEDSLELSFQGKDDVKLDIFFFYEETDHMWNGGTQAKTGKKFKYLFPKFTLCWTEFVDMKVHVPCETLEYIEANYGKTWKIPVKTWDWKRSPPNVQPNGIWPISEWDEVIQLY.

Residues 1 to 7 (MSRINKN) are Cytoplasmic-facing. Residues 6-27 (KNVVLALLTLTSSAFLLFQLYY) form a required and sufficient for interaction with POMGNT1 region. A helical; Signal-anchor for type II membrane protein transmembrane segment spans residues 8–28 (VVLALLTLTSSAFLLFQLYYY). At 29 to 461 (KHYLSTRNGA…SEWDEVIQLY (433 aa)) the chain is on the lumenal side. Asn92 carries an N-linked (GlcNAc...) asparagine glycan.

It belongs to the LicD transferase family. As to quaternary structure, forms a complex composed of FKTN/fukutin, FKRP and RXYLT1/TMEM5. Interacts (via transmembrane domain) with POMGNT1; the interaction is direct and is required for normal POMGNT1 location in Golgi membranes. Expressed in the retina (at protein level).

Its subcellular location is the golgi apparatus membrane. It is found in the cytoplasm. It localises to the nucleus. The enzyme catalyses 3-O-[beta-D-GalNAc-(1-&gt;3)-beta-D-GlcNAc-(1-&gt;4)-(O-6-P-alpha-D-Man)]-Thr-[protein] + CDP-L-ribitol = 3-O-[Rib-ol-P-3-beta-D-GalNAc-(1-&gt;3)-beta-D-GlcNAc-(1-&gt;4)-(O-6-P-alpha-D-Man)]-Thr-[protein] + CMP + H(+). The protein operates within protein modification; protein glycosylation. Its function is as follows. Catalyzes the transfer of CDP-ribitol to the distal N-acetylgalactosamine of the phosphorylated O-mannosyl trisaccharide (N-acetylgalactosamine-beta-3-N-acetylglucosamine-beta-4-(phosphate-6-)mannose), a carbohydrate structure present in alpha-dystroglycan (DAG1). This constitutes the first step in the formation of the ribitol 5-phosphate tandem repeat which links the phosphorylated O-mannosyl trisaccharide to the ligand binding moiety composed of repeats of 3-xylosyl-alpha-1,3-glucuronic acid-beta-1. May interact with and reinforce a large complex encompassing the outside and inside of muscle membranes. Could be involved in brain development. This chain is Ribitol-5-phosphate transferase FKTN, found in Macaca fascicularis (Crab-eating macaque).